The chain runs to 797 residues: Protocadherin-3 (797 aa).

The N-terminal stretch at 1–30 is a signal peptide; that stretch reads METALAKIPQQRQVFFLTILSLLWKSSSEA. The Extracellular segment spans residues 31–691; the sequence is IRYSMPEETE…DNYDVLTLYL (661 aa). 5 consecutive Cadherin domains span residues 35–133, 138–242, 247–346, 351–450, and 455–560; these read MPEE…SPEF, MLLT…SPQF, YKVQ…APEL, LTVL…APAF, and YTMF…APFV. Residues Asn169, Asn276, and Asn417 are each glycosylated (N-linked (GlcNAc...) asparagine). Residue Asn566 is glycosylated (N-linked (GlcNAc...) asparagine). The Cadherin 6 domain occupies 567 to 670; the sequence is ASAPCTELLP…VVDGFSQPYL (104 aa). The chain crosses the membrane as a helical span at residues 692-712; the sequence is VIALASVSSLFLLSVVLFVGV. Residues 713–797 are Cytoplasmic-facing; the sequence is RLCRRAREAS…AVVHNSVGFY (85 aa).

Expressed in brain.

Its subcellular location is the cell membrane. Functionally, potential calcium-dependent cell-adhesion protein. May be involved in the establishment and maintenance of specific neuronal connections in the brain. The sequence is that of Protocadherin-3 (Pcdh3) from Rattus norvegicus (Rat).